Consider the following 196-residue polypeptide: ATP-dependent Clp protease proteolytic subunit (196 aa).

Residue serine 99 is the Nucleophile of the active site. The active site involves histidine 124.

Belongs to the peptidase S14 family. As to quaternary structure, fourteen ClpP subunits assemble into 2 heptameric rings which stack back to back to give a disk-like structure with a central cavity, resembling the structure of eukaryotic proteasomes.

The protein resides in the cytoplasm. The catalysed reaction is Hydrolysis of proteins to small peptides in the presence of ATP and magnesium. alpha-casein is the usual test substrate. In the absence of ATP, only oligopeptides shorter than five residues are hydrolyzed (such as succinyl-Leu-Tyr-|-NHMec, and Leu-Tyr-Leu-|-Tyr-Trp, in which cleavage of the -Tyr-|-Leu- and -Tyr-|-Trp bonds also occurs).. In terms of biological role, cleaves peptides in various proteins in a process that requires ATP hydrolysis. Has a chymotrypsin-like activity. Plays a major role in the degradation of misfolded proteins. The chain is ATP-dependent Clp protease proteolytic subunit from Campylobacter lari (strain RM2100 / D67 / ATCC BAA-1060).